The chain runs to 1025 residues: Presequence protease, mitochondrial (1025 aa).

H90 provides a ligand contact to Zn(2+). E93 serves as the catalytic Proton acceptor. Zn(2+) is bound at residue H94. The active site involves E166. Residue E197 coordinates Zn(2+).

Belongs to the peptidase M16 family. PreP subfamily. In terms of assembly, monomer and homodimer; homodimerization is induced by binding of the substrate. Zn(2+) is required as a cofactor.

The protein resides in the mitochondrion intermembrane space. It is found in the mitochondrion matrix. Functionally, degrades mitochondrial transit peptides after their cleavage in the intermembrane space or in the matrix, and presequence peptides; clearance of these peptides is required to keep the presequence processing machinery running. Preferentially cleaves the N-terminal side of paired basic amino acid residues. Also degrades other unstructured peptides. May function as an ATP-dependent peptidase as opposed to a metalloendopeptidase. This Aspergillus oryzae (strain ATCC 42149 / RIB 40) (Yellow koji mold) protein is Presequence protease, mitochondrial (cym1).